The following is a 166-amino-acid chain: Large ribosomal subunit protein uL10 (166 aa).

It belongs to the universal ribosomal protein uL10 family. As to quaternary structure, part of the ribosomal stalk of the 50S ribosomal subunit. The N-terminus interacts with L11 and the large rRNA to form the base of the stalk. The C-terminus forms an elongated spine to which L12 dimers bind in a sequential fashion forming a multimeric L10(L12)X complex.

Its function is as follows. Forms part of the ribosomal stalk, playing a central role in the interaction of the ribosome with GTP-bound translation factors. The chain is Large ribosomal subunit protein uL10 from Pseudomonas fluorescens (strain SBW25).